Consider the following 146-residue polypeptide: D-aminoacyl-tRNA deacylase (146 aa).

The Gly-cisPro motif, important for rejection of L-amino acids motif lies at Gly-137 to Pro-138.

The protein belongs to the DTD family. Homodimer.

It is found in the cytoplasm. The catalysed reaction is glycyl-tRNA(Ala) + H2O = tRNA(Ala) + glycine + H(+). It catalyses the reaction a D-aminoacyl-tRNA + H2O = a tRNA + a D-alpha-amino acid + H(+). In terms of biological role, an aminoacyl-tRNA editing enzyme that deacylates mischarged D-aminoacyl-tRNAs. Also deacylates mischarged glycyl-tRNA(Ala), protecting cells against glycine mischarging by AlaRS. Acts via tRNA-based rather than protein-based catalysis; rejects L-amino acids rather than detecting D-amino acids in the active site. By recycling D-aminoacyl-tRNA to D-amino acids and free tRNA molecules, this enzyme counteracts the toxicity associated with the formation of D-aminoacyl-tRNA entities in vivo and helps enforce protein L-homochirality. The polypeptide is D-aminoacyl-tRNA deacylase (Desulfatibacillum aliphaticivorans).